The chain runs to 493 residues: uncharacterized protein (493 aa).

8–37 (DFLVVGGGTCGCVVAARLSEDPSATVMLLE) serves as a coordination point for FAD. H429 (proton acceptor) is an active-site residue.

This sequence belongs to the GMC oxidoreductase family. FAD is required as a cofactor.

This is an uncharacterized protein from Rhodococcus erythropolis (Arthrobacter picolinophilus).